The following is a 382-amino-acid chain: Alkanesulfonate monooxygenase (382 aa).

This sequence belongs to the SsuD family.

It catalyses the reaction an alkanesulfonate + FMNH2 + O2 = an aldehyde + FMN + sulfite + H2O + 2 H(+). In terms of biological role, catalyzes the desulfonation of aliphatic sulfonates. The sequence is that of Alkanesulfonate monooxygenase from Ectopseudomonas mendocina (strain ymp) (Pseudomonas mendocina).